The chain runs to 374 residues: MAAGLDSWNSTINGTWEGDELGYKCRFNEDFKYVLLPVSYGVVCVLGLCLNVVALYIFLCRLKTWNASTTYMFHLAVSDSLYAASLPLLVYYYAQGDHWPFSTVLCKLVRFLFYTNLYCSILFLTCISVHRCLGVLRPLHSLSWGHARYARRVAAVVWVLVLACQAPVLYFVTTSVRGTRITCHDTSARELFSHFVAYSSVMLGLLFAVPFSIILVCYVLMARRLLKPAYGTTGLPRAKRKSVRTIALVLAVFALCFLPFHVTRTLYYSFRSLDLSCHTLNAINMAYKITRPLASANSCLDPVLYFLAGQRLVRFARDAKPATEPTPSPQARRKLGLHRPNRTDTVRKDLSISSDDSRRTESTPAGSETKDIRL.

Topologically, residues Met1–Lys32 are extracellular. Residues Asn9 and Asn13 are each glycosylated (N-linked (GlcNAc...) asparagine). Residues Tyr33–Leu59 traverse the membrane as a helical segment. Residues Cys60–Thr70 are Cytoplasmic-facing. The helical transmembrane segment at Tyr71–Tyr93 threads the bilayer. Topologically, residues Ala94–Arg110 are extracellular. Cysteines 106 and 183 form a disulfide. The chain crosses the membrane as a helical span at residues Phe111 to Val129. Topologically, residues His130–Arg152 are cytoplasmic. Residues Val153–Val172 form a helical membrane-spanning segment. Residues Thr173–His194 lie on the Extracellular side of the membrane. A helical transmembrane segment spans residues Phe195 to Leu220. Topologically, residues Met221–Thr245 are cytoplasmic. Residues Ile246–Tyr268 form a helical membrane-spanning segment. The Extracellular portion of the chain corresponds to Ser269–Ala286. The helical transmembrane segment at Tyr287–Ala308 threads the bilayer. The Cytoplasmic segment spans residues Gly309–Leu374. A disordered region spans residues Asp318 to Leu374. Positions Ala331–Pro340 are enriched in basic residues. The segment covering Asn341–Glu361 has biased composition (basic and acidic residues).

It belongs to the G-protein coupled receptor 1 family.

Its subcellular location is the cell membrane. Its function is as follows. Receptor for ATP and UTP coupled to G-proteins that activate a phosphatidylinositol-calcium second messenger system. The affinity range is UTP = ATP &gt; ATP-gamma-S &gt;&gt; 2-methylthio-ATP = ADP. This Rattus norvegicus (Rat) protein is P2Y purinoceptor 2 (P2ry2).